A 117-amino-acid polypeptide reads, in one-letter code: Large ribosomal subunit protein bL20c (117 aa).

It belongs to the bacterial ribosomal protein bL20 family.

The protein resides in the plastid. Its subcellular location is the chloroplast. Functionally, binds directly to 23S ribosomal RNA and is necessary for the in vitro assembly process of the 50S ribosomal subunit. It is not involved in the protein synthesizing functions of that subunit. In Draba nemorosa (Woodland whitlowgrass), this protein is Large ribosomal subunit protein bL20c.